The chain runs to 214 residues: Response regulator GacA (214 aa).

The Response regulatory domain maps to Lys3–Phe119. 4-aspartylphosphate is present on Asp54. The region spanning Asn143–Gly208 is the HTH luxR-type domain. The segment at residues Val167–Tyr186 is a DNA-binding region (H-T-H motif).

In terms of processing, phosphorylated by LemA.

Its function is as follows. Forms part of a two-component regulatory system GacA/GacA(LemA). May be involved in lesion formation, swarming and in the production of extracellular protease, syringomycin and N-acyl-L-homoserine lactone (acyl-HSL). This chain is Response regulator GacA (gacA), found in Pseudomonas syringae pv. syringae (strain B728a).